We begin with the raw amino-acid sequence, 241 residues long: Proteasome subunit alpha (241 aa).

The protein belongs to the peptidase T1A family. In terms of assembly, the 20S proteasome core is composed of 14 alpha and 14 beta subunits that assemble into four stacked heptameric rings, resulting in a barrel-shaped structure. The two inner rings, each composed of seven catalytic beta subunits, are sandwiched by two outer rings, each composed of seven alpha subunits. The catalytic chamber with the active sites is on the inside of the barrel. Has a gated structure, the ends of the cylinder being occluded by the N-termini of the alpha-subunits. Is capped at one or both ends by the proteasome regulatory ATPase, PAN.

Its subcellular location is the cytoplasm. Its activity is regulated as follows. The formation of the proteasomal ATPase PAN-20S proteasome complex, via the docking of the C-termini of PAN into the intersubunit pockets in the alpha-rings, triggers opening of the gate for substrate entry. Interconversion between the open-gate and close-gate conformations leads to a dynamic regulation of the 20S proteasome proteolysis activity. Its function is as follows. Component of the proteasome core, a large protease complex with broad specificity involved in protein degradation. The chain is Proteasome subunit alpha from Saccharolobus solfataricus (strain ATCC 35092 / DSM 1617 / JCM 11322 / P2) (Sulfolobus solfataricus).